Reading from the N-terminus, the 235-residue chain is UPF0173 metal-dependent hydrolase Oant_3663 (235 aa).

The protein belongs to the UPF0173 family.

This chain is UPF0173 metal-dependent hydrolase Oant_3663, found in Brucella anthropi (strain ATCC 49188 / DSM 6882 / CCUG 24695 / JCM 21032 / LMG 3331 / NBRC 15819 / NCTC 12168 / Alc 37) (Ochrobactrum anthropi).